The following is a 304-amino-acid chain: UDP-N-acetylenolpyruvoylglucosamine reductase (304 aa).

The region spanning 33–198 is the FAD-binding PCMH-type domain; it reads RVGGPVDILL…ITATFCFESG (166 aa). Arg177 is an active-site residue. The active-site Proton donor is the Ser227. Glu297 is a catalytic residue.

It belongs to the MurB family. The cofactor is FAD.

The protein resides in the cytoplasm. It carries out the reaction UDP-N-acetyl-alpha-D-muramate + NADP(+) = UDP-N-acetyl-3-O-(1-carboxyvinyl)-alpha-D-glucosamine + NADPH + H(+). Its pathway is cell wall biogenesis; peptidoglycan biosynthesis. Cell wall formation. This Clostridium botulinum (strain Alaska E43 / Type E3) protein is UDP-N-acetylenolpyruvoylglucosamine reductase.